The primary structure comprises 183 residues: ATP synthase subunit b, chloroplastic (183 aa).

A helical transmembrane segment spans residues 25–45 (DILATNLINLTVVVGVLIFFG).

Belongs to the ATPase B chain family. F-type ATPases have 2 components, F(1) - the catalytic core - and F(0) - the membrane proton channel. F(1) has five subunits: alpha(3), beta(3), gamma(1), delta(1), epsilon(1). F(0) has four main subunits: a(1), b(1), b'(1) and c(10-14). The alpha and beta chains form an alternating ring which encloses part of the gamma chain. F(1) is attached to F(0) by a central stalk formed by the gamma and epsilon chains, while a peripheral stalk is formed by the delta, b and b' chains.

It localises to the plastid. It is found in the chloroplast thylakoid membrane. F(1)F(0) ATP synthase produces ATP from ADP in the presence of a proton or sodium gradient. F-type ATPases consist of two structural domains, F(1) containing the extramembraneous catalytic core and F(0) containing the membrane proton channel, linked together by a central stalk and a peripheral stalk. During catalysis, ATP synthesis in the catalytic domain of F(1) is coupled via a rotary mechanism of the central stalk subunits to proton translocation. Functionally, component of the F(0) channel, it forms part of the peripheral stalk, linking F(1) to F(0). The sequence is that of ATP synthase subunit b, chloroplastic from Saccharum hybrid (Sugarcane).